We begin with the raw amino-acid sequence, 69 residues long: Toxin Tz2 (69 aa).

Positions 1–7 are cleaved as a signal peptide; sequence IEVVMGG. Positions 8 to 69 constitute an LCN-type CS-alpha/beta domain; that stretch reads KEGYLLDKSN…KMWDLKTNKC (62 aa). 4 disulfide bridges follow: Cys-19/Cys-69, Cys-23/Cys-45, Cys-31/Cys-50, and Cys-35/Cys-52.

It belongs to the long (4 C-C) scorpion toxin superfamily. Sodium channel inhibitor family. Beta subfamily. As to expression, expressed by the venom gland.

Its subcellular location is the secreted. Functionally, beta toxins bind voltage-independently at site-4 of sodium channels (Nav) and shift the voltage of activation toward more negative potentials thereby affecting sodium channel activation and promoting spontaneous and repetitive firing. The polypeptide is Toxin Tz2 (Tityus zulianus (Venezuelan scorpion)).